A 142-amino-acid chain; its full sequence is Large ribosomal subunit protein uL13 (142 aa).

The protein belongs to the universal ribosomal protein uL13 family. In terms of assembly, part of the 50S ribosomal subunit.

Its function is as follows. This protein is one of the early assembly proteins of the 50S ribosomal subunit, although it is not seen to bind rRNA by itself. It is important during the early stages of 50S assembly. This chain is Large ribosomal subunit protein uL13, found in Psychrobacter cryohalolentis (strain ATCC BAA-1226 / DSM 17306 / VKM B-2378 / K5).